Here is a 464-residue protein sequence, read N- to C-terminus: Putative protein TIC 214 C-terminal part (464 aa).

Belongs to the TIC214 family. In terms of assembly, part of the Tic complex.

The protein localises to the plastid. It is found in the chloroplast. Its function is as follows. Involved in protein precursor import into chloroplasts. May be part of an intermediate translocation complex acting as a protein-conducting channel at the inner envelope. This Marchantia polymorpha (Common liverwort) protein is Putative protein TIC 214 C-terminal part.